A 418-amino-acid chain; its full sequence is Tyrosine--tRNA ligase (418 aa).

An L-tyrosine-binding site is contributed by Tyr-34. A 'HIGH' region motif is present at residues 39 to 48 (PTADSLHLGH). Tyr-169 and Gln-173 together coordinate L-tyrosine. The short motif at 229-233 (KFGKS) is the 'KMSKS' region element. Lys-232 contacts ATP. Positions 352–418 (LNLVDMLVTA…GKKKYAVLTY (67 aa)) constitute an S4 RNA-binding domain.

This sequence belongs to the class-I aminoacyl-tRNA synthetase family. TyrS type 1 subfamily. As to quaternary structure, homodimer.

It localises to the cytoplasm. The catalysed reaction is tRNA(Tyr) + L-tyrosine + ATP = L-tyrosyl-tRNA(Tyr) + AMP + diphosphate + H(+). Functionally, catalyzes the attachment of tyrosine to tRNA(Tyr) in a two-step reaction: tyrosine is first activated by ATP to form Tyr-AMP and then transferred to the acceptor end of tRNA(Tyr). This is Tyrosine--tRNA ligase from Streptococcus pyogenes serotype M12 (strain MGAS2096).